A 131-amino-acid polypeptide reads, in one-letter code: Sec-independent protein translocase protein TatB (131 aa).

The chain crosses the membrane as a helical span at residues 2–22; the sequence is FANIGWGEMLVLVMVGLVVLG. Positions 90 to 131 are disordered; that stretch reads DSLFTGDFDRPTPKKPDAAGSAGPDATEQIGAGPIPFDSDAT. Basic and acidic residues predominate over residues 96–106; sequence DFDRPTPKKPD.

It belongs to the TatB family. In terms of assembly, the Tat system comprises two distinct complexes: a TatABC complex, containing multiple copies of TatA, TatB and TatC subunits, and a separate TatA complex, containing only TatA subunits. Substrates initially bind to the TatABC complex, which probably triggers association of the separate TatA complex to form the active translocon.

The protein localises to the cell membrane. Functionally, part of the twin-arginine translocation (Tat) system that transports large folded proteins containing a characteristic twin-arginine motif in their signal peptide across membranes. Together with TatC, TatB is part of a receptor directly interacting with Tat signal peptides. TatB may form an oligomeric binding site that transiently accommodates folded Tat precursor proteins before their translocation. This is Sec-independent protein translocase protein TatB from Mycobacterium bovis (strain ATCC BAA-935 / AF2122/97).